The following is a 185-amino-acid chain: Endoribonuclease YbeY (185 aa).

3 residues coordinate Zn(2+): histidine 135, histidine 139, and histidine 145.

Belongs to the endoribonuclease YbeY family. Zn(2+) is required as a cofactor.

The protein resides in the cytoplasm. Its function is as follows. Single strand-specific metallo-endoribonuclease involved in late-stage 70S ribosome quality control and in maturation of the 3' terminus of the 16S rRNA. The sequence is that of Endoribonuclease YbeY from Parasynechococcus marenigrum (strain WH8102).